The chain runs to 253 residues: 5'/3'-nucleotidase SurE (253 aa).

A divalent metal cation-binding residues include Asp-8, Asp-9, Ser-39, and Asn-92.

This sequence belongs to the SurE nucleotidase family. Requires a divalent metal cation as cofactor.

It is found in the cytoplasm. It carries out the reaction a ribonucleoside 5'-phosphate + H2O = a ribonucleoside + phosphate. It catalyses the reaction a ribonucleoside 3'-phosphate + H2O = a ribonucleoside + phosphate. The enzyme catalyses [phosphate](n) + H2O = [phosphate](n-1) + phosphate + H(+). Functionally, nucleotidase with a broad substrate specificity as it can dephosphorylate various ribo- and deoxyribonucleoside 5'-monophosphates and ribonucleoside 3'-monophosphates with highest affinity to 3'-AMP. Also hydrolyzes polyphosphate (exopolyphosphatase activity) with the preference for short-chain-length substrates (P20-25). Might be involved in the regulation of dNTP and NTP pools, and in the turnover of 3'-mononucleotides produced by numerous intracellular RNases (T1, T2, and F) during the degradation of various RNAs. This Escherichia coli O7:K1 (strain IAI39 / ExPEC) protein is 5'/3'-nucleotidase SurE.